The following is a 454-amino-acid chain: L-serine dehydratase 1 (454 aa).

Belongs to the iron-sulfur dependent L-serine dehydratase family. [4Fe-4S] cluster serves as cofactor. In terms of processing, activated by post-translational modification by a system involving at least three gene products. Activation is mimicked in vitro by iron and dithiothreitol. There is considerable evidence for a free-radical activation mechanism.

The enzyme catalyses L-serine = pyruvate + NH4(+). It participates in carbohydrate biosynthesis; gluconeogenesis. In terms of biological role, also deaminates threonine, particularly when it is present in high concentration. The sequence is that of L-serine dehydratase 1 (sdaA) from Escherichia coli (strain K12).